The primary structure comprises 945 residues: Cysteine-rich, acidic integral membrane protein (945 aa).

A disordered region spans residues 1-20 (MGNEAGPIFEESNAEVGTPP). An N-terminal signal peptide occupies residues 1-23 (MGNEAGPIFEESNAEVGTPPADA). Topologically, residues 24–882 (VHDDFFFDYK…GKGSSVSAGL (859 aa)) are extracellular. 2 N-linked (GlcNAc...) asparagine glycosylation sites follow: asparagine 34 and asparagine 43. 66 tandem repeats follow at residues 40 to 51 (DDCNITGDCNET), 52 to 63 (DDCDITGDCNET), 64 to 75 (DDCNITGDCNET), 76 to 87 (DDCNITGDCNET), 88 to 99 (DDCNITGDCNET), 100 to 111 (DDCNITGDCNET), 112 to 123 (DDCDITGDCNET), 124 to 135 (DDCNITGDCNET), 136 to 147 (DDCNITGDCNET), 148 to 159 (DDCNITGDCNET), 160 to 171 (DDCDITGDCNET), 172 to 183 (DDCNITGDCNET), 184 to 195 (DDCDITGDCNET), 196 to 207 (DDCNITGDCNET), 208 to 219 (DDCNITGDCNET), 220 to 231 (DDCNITGDCNET), 232 to 243 (DDCNITGDCNET), 244 to 255 (DDCNITGDCNET), 256 to 267 (DDCNITGDCNET), 268 to 279 (DDCDITGDCNET), 280 to 291 (DDCNITGDCNET), 292 to 303 (DDCNITGDCNET), 304 to 315 (DDCNITGDCNET), 316 to 327 (DDCNITGDCNET), 328 to 339 (DDCNITGDCNET), 340 to 351 (DDCNITGDCNET), 352 to 363 (DDCDITGDCNET), 364 to 375 (DDCNITGDCNET), 376 to 387 (DDCNITGDCNET), 388 to 399 (DDCNITGDCNET), 400 to 411 (DDCNITGDCNET), 412 to 423 (DDCNITGDCNET), 424 to 435 (DDCDITGDCNET), 436 to 447 (DDCNITGDCNET), 448 to 459 (DDCDITGDCNET), 460 to 471 (DDCNITGDCNET), 472 to 483 (DDCNITGDCNET), 484 to 495 (DDCNITGDCNET), 496 to 507 (DDCNITGDCNET), 508 to 519 (DDCNITGDCNET), 520 to 531 (DDCNITGDCNET), 532 to 543 (DDCDITGDCNET), 544 to 555 (DDCNITGDCNET), 556 to 567 (DDCNITGDCNET), 568 to 579 (DDCNITGDCNET), 580 to 591 (DDCNITGDCNET), 592 to 603 (DDCNITGDCNET), 604 to 615 (DDCDITGDCNET), 616 to 627 (DDCNITGDCNET), 628 to 639 (DDCDITGDCNET), 640 to 651 (DDCNITGDCNET), 652 to 663 (DDCNITGDCNET), 664 to 675 (DDCNITGDCNET), 676 to 687 (DDCNITGDCNET), 688 to 699 (DDCNITGDCNET), 700 to 711 (DDCNITGDCNET), 712 to 723 (DDCDITGDCNET), 724 to 735 (DDCNITGDCNET), 736 to 747 (DDCNITGDCNET), 748 to 759 (DDCNITGDCNET), 760 to 771 (DDCNITGDCNET), 772 to 783 (DDCNITGDCNET), 784 to 795 (DDCDITGDCNET), 796 to 807 (DDCNITGDCNET), 808 to 819 (DDCDITGDCNET), and 820 to 831 (DDCNITGDCNET). A 66 X 12 AA tandem repeats of D-D-C-[ND]-I-T-G-D-G-N-E-T region spans residues 40–831 (DDCNITGDCN…CNITGDCNET (792 aa)). 4 N-linked (GlcNAc...) asparagine glycosylation sites follow: asparagine 67, asparagine 79, asparagine 91, and asparagine 103. Asparagine 127, asparagine 139, and asparagine 151 each carry an N-linked (GlcNAc...) asparagine glycan. The N-linked (GlcNAc...) asparagine glycan is linked to asparagine 175. Residues asparagine 199, asparagine 211, asparagine 223, asparagine 235, asparagine 247, and asparagine 259 are each glycosylated (N-linked (GlcNAc...) asparagine). N-linked (GlcNAc...) asparagine glycosylation is found at asparagine 283, asparagine 295, asparagine 307, asparagine 319, asparagine 331, and asparagine 343. Residues asparagine 367, asparagine 379, asparagine 391, asparagine 403, and asparagine 415 are each glycosylated (N-linked (GlcNAc...) asparagine). Asparagine 439 carries an N-linked (GlcNAc...) asparagine glycan. N-linked (GlcNAc...) asparagine glycosylation is found at asparagine 463, asparagine 475, asparagine 487, asparagine 499, asparagine 511, and asparagine 523. Residues asparagine 547, asparagine 559, asparagine 571, asparagine 583, and asparagine 595 are each glycosylated (N-linked (GlcNAc...) asparagine). Residue asparagine 619 is glycosylated (N-linked (GlcNAc...) asparagine). N-linked (GlcNAc...) asparagine glycosylation is found at asparagine 643, asparagine 655, asparagine 667, asparagine 679, asparagine 691, and asparagine 703. Asparagine 727, asparagine 739, asparagine 751, asparagine 763, and asparagine 775 each carry an N-linked (GlcNAc...) asparagine glycan. N-linked (GlcNAc...) asparagine glycosylation occurs at asparagine 799. Asparagine 823 is a glycosylation site (N-linked (GlcNAc...) asparagine). Residues 883–903 (LLLAGSTFLVLAVGLSAVLFL) traverse the membrane as a helical segment. Topologically, residues 904 to 945 (GRERQNAVVICDNEVMMEEVPGCLSDASFAVPVTQSSDEARP) are cytoplasmic.

It is found in the flagellar pocket. The protein resides in the cell membrane. In terms of biological role, supposed to function as cell surface receptor. Possibly involved in receptor-mediated endocytosis. This chain is Cysteine-rich, acidic integral membrane protein (CRAM), found in Trypanosoma brucei brucei.